A 463-amino-acid polypeptide reads, in one-letter code: Fumarate hydratase class II (463 aa).

Substrate is bound by residues 98-100, 129-132, 139-141, and T187; these read SGT, HPND, and SSN. H188 (proton donor/acceptor) is an active-site residue. S318 is an active-site residue. Substrate is bound by residues S319 and 324–326; that span reads KVN.

It belongs to the class-II fumarase/aspartase family. Fumarase subfamily. As to quaternary structure, homotetramer.

The protein resides in the cytoplasm. It catalyses the reaction (S)-malate = fumarate + H2O. It functions in the pathway carbohydrate metabolism; tricarboxylic acid cycle; (S)-malate from fumarate: step 1/1. Its function is as follows. Involved in the TCA cycle. Catalyzes the stereospecific interconversion of fumarate to L-malate. The chain is Fumarate hydratase class II from Brucella melitensis biotype 1 (strain ATCC 23456 / CCUG 17765 / NCTC 10094 / 16M).